The primary structure comprises 107 residues: Nucleoid-associated protein NE0434 (107 aa).

Belongs to the YbaB/EbfC family. As to quaternary structure, homodimer.

The protein localises to the cytoplasm. It is found in the nucleoid. Binds to DNA and alters its conformation. May be involved in regulation of gene expression, nucleoid organization and DNA protection. The sequence is that of Nucleoid-associated protein NE0434 from Nitrosomonas europaea (strain ATCC 19718 / CIP 103999 / KCTC 2705 / NBRC 14298).